A 290-amino-acid polypeptide reads, in one-letter code: MAATFFGEVVKAPCRAGTEDEEEEEEEEGRRETPEDREVRQQLARKREVRLLRRQTKTSLEVSLLEKYPCSKFIIAIGNNAVAFLSSFVMNSGVWEEVGCAKLWNEWCRTADTTHLSSTEAFCGFYHLKSNPSVFLCQCSCYVAEDQQYQWLEKVFGSCPRKNMQITILTCRHVTDYKTLESTGSLPSPFLKALKTQNFKDPACCPLLEQPNIVHDLPAAVLSYCQVWKIPAILYLCYTDVMKLDLITVEAFKPILSTRSLKGLVKNISQSTEILKKLMTTNEIQSNIYT.

The segment at 1 to 39 (MAATFFGEVVKAPCRAGTEDEEEEEEEEGRRETPEDREV) is disordered. N-acetylalanine is present on Ala2. Thr18 carries the phosphothreonine modification. The segment covering 28–39 (EGRRETPEDREV) has biased composition (basic and acidic residues). Thr56 is modified (phosphothreonine). Ser182 carries the phosphoserine modification. Residue Lys266 is modified to N6-acetyllysine.

It belongs to the PSMG1 family. As to quaternary structure, forms a heterodimer with PSMG2. The PSMG1-PSMG2 heterodimer interacts directly with the PSMA5 and PSMA7 proteasome alpha subunits. Degraded by the proteasome upon completion of 20S proteasome maturation.

The protein resides in the cytoplasm. The protein localises to the endoplasmic reticulum. Its function is as follows. Chaperone protein which promotes assembly of the 20S proteasome as part of a heterodimer with PSMG2. The PSMG1-PSMG2 heterodimer binds to the PSMA5 and PSMA7 proteasome subunits, promotes assembly of the proteasome alpha subunits into the heteroheptameric alpha ring and prevents alpha ring dimerization. The sequence is that of Proteasome assembly chaperone 1 (PSMG1) from Papio anubis (Olive baboon).